Here is a 388-residue protein sequence, read N- to C-terminus: Probable peptidoglycan glycosyltransferase FtsW (388 aa).

Residues 1 to 19 (MSAAAPKPRPAHRFHIDQT) lie on the Cytoplasmic side of the membrane. The helical transmembrane segment at 20–40 (LLSVCLCLLGIGFVMVASSSM) threads the bilayer. The Periplasmic portion of the chain corresponds to 41-57 (HLGVKMADDVSYYPFKQ). A helical transmembrane segment spans residues 58 to 78 (LVHIILGLMFAAAILAIPMKY). The Cytoplasmic segment spans residues 79-85 (WQKIGQP). The chain crosses the membrane as a helical span at residues 86–106 (LFIVGLVLLLVVLIPGVGVKV). The Periplasmic portion of the chain corresponds to 107–117 (NGSTRWLSLLG). The chain crosses the membrane as a helical span at residues 118–137 (LRIQVSEVMKFISVVYMAGY). Over 138–147 (ITRHSDHVRH) the chain is Cytoplasmic. Residues 148–168 (SIFGLLRPLMLLSVASILLLL) traverse the membrane as a helical segment. Topologically, residues 169 to 170 (EP) are periplasmic. Residues 171–191 (DFGSAVVILIIAMGMMFLGGA) traverse the membrane as a helical segment. Arginine 192 is a topological domain (cytoplasmic). A helical transmembrane segment spans residues 193–213 (LSPFVALVALISSAGAILASS). Over 214–271 (ADYRVKRMTSFLNPWEHARDSGYQLTQALISFGRGEVSGVGLGNGLQKLFYLPEAHTD) the chain is Periplasmic. The chain crosses the membrane as a helical span at residues 272–292 (FLFSVLGEELGLVGVTLVIAL). At 293–315 (FTTLVVRGFSIGEQAEAAGERFS) the chain is on the cytoplasmic side. A helical membrane pass occupies residues 316–336 (ALVAYGLVIWFGFQAFVNMGV). Over 337–348 (NMGILPTKGLTL) the chain is Periplasmic. A helical transmembrane segment spans residues 349-369 (PLMSYGGGSMIVMCGAMAVLF). Topologically, residues 370–388 (RIHYEVTELHKSNIKGKSR) are cytoplasmic.

Belongs to the SEDS family. FtsW subfamily.

Its subcellular location is the cell inner membrane. The catalysed reaction is [GlcNAc-(1-&gt;4)-Mur2Ac(oyl-L-Ala-gamma-D-Glu-L-Lys-D-Ala-D-Ala)](n)-di-trans,octa-cis-undecaprenyl diphosphate + beta-D-GlcNAc-(1-&gt;4)-Mur2Ac(oyl-L-Ala-gamma-D-Glu-L-Lys-D-Ala-D-Ala)-di-trans,octa-cis-undecaprenyl diphosphate = [GlcNAc-(1-&gt;4)-Mur2Ac(oyl-L-Ala-gamma-D-Glu-L-Lys-D-Ala-D-Ala)](n+1)-di-trans,octa-cis-undecaprenyl diphosphate + di-trans,octa-cis-undecaprenyl diphosphate + H(+). It participates in cell wall biogenesis; peptidoglycan biosynthesis. Its function is as follows. Peptidoglycan polymerase that is essential for cell division. The protein is Probable peptidoglycan glycosyltransferase FtsW of Methylomonas methanica (strain DSM 25384 / MC09).